Consider the following 479-residue polypeptide: NADH oxidase (479 aa).

FAD-binding positions include 8–12 (GVNHA), aspartate 33, cysteine 43, valine 80, 111–114 (ASGA), lysine 149, and tyrosine 177. Histidine 11 serves as the catalytic Proton acceptor. Catalysis depends on cysteine 43, which acts as the Redox-active. The residue at position 43 (cysteine 43) is a Cysteine sulfinic acid (-SO2H). Residues 170-185 (VAIV…LAEA), aspartate 197, and glycine 264 each bind NAD(+). Residues 295-305 (LNHENVYVIGG), leucine 322, alanine 323, and threonine 324 each bind FAD. NAD(+) is bound at residue alanine 353. Phenylalanine 450 provides a ligand contact to FAD.

The protein belongs to the class-III pyridine nucleotide-disulfide oxidoreductase family. The cofactor is FAD.

The enzyme catalyses 2 NADH + O2 + 2 H(+) = 2 NAD(+) + 2 H2O. Its function is as follows. Catalyzes the four-electron reduction of molecular oxygen to water. This Mycoplasma pneumoniae (strain ATCC 29342 / M129 / Subtype 1) (Mycoplasmoides pneumoniae) protein is NADH oxidase (nox).